The primary structure comprises 211 residues: Small ribosomal subunit protein uS5 (211 aa).

The interval 1–41 is disordered; it reads MPGRERRDGGRSADDNKQNDRNERRGGGRRDDRRNQQQDER. One can recognise an S5 DRBM domain in the interval 44–107; that stretch reads YIERVVTINR…EEARKNFFRV (64 aa).

It belongs to the universal ribosomal protein uS5 family. In terms of assembly, part of the 30S ribosomal subunit. Contacts proteins S4 and S8.

Its function is as follows. With S4 and S12 plays an important role in translational accuracy. Located at the back of the 30S subunit body where it stabilizes the conformation of the head with respect to the body. This chain is Small ribosomal subunit protein uS5, found in Corynebacterium glutamicum (strain R).